A 76-amino-acid chain; its full sequence is MLAPALTHVVKGIVDHPDDVRVVAKSSPRGEVLEVRVNPEDLGRVIGRSGRTAKALRTLVTALADGRRVRVDVVDD.

One can recognise a KH domain in the interval 30 to 76; it reads GEVLEVRVNPEDLGRVIGRSGRTAKALRTLVTALADGRRVRVDVVDD.

This sequence belongs to the KhpA RNA-binding protein family.

It is found in the cytoplasm. Functionally, a probable RNA-binding protein. The polypeptide is RNA-binding protein KhpA (Leifsonia xyli subsp. xyli (strain CTCB07)).